Consider the following 290-residue polypeptide: Elongation factor Ts (290 aa).

The segment at 83-86 (TDFV) is involved in Mg(2+) ion dislocation from EF-Tu.

Belongs to the EF-Ts family.

The protein resides in the cytoplasm. In terms of biological role, associates with the EF-Tu.GDP complex and induces the exchange of GDP to GTP. It remains bound to the aminoacyl-tRNA.EF-Tu.GTP complex up to the GTP hydrolysis stage on the ribosome. The polypeptide is Elongation factor Ts (tsf) (Aquifex aeolicus (strain VF5)).